The chain runs to 157 residues: uncharacterized protein (157 aa).

This is an uncharacterized protein from Magallana gigas (Pacific oyster).